A 262-amino-acid polypeptide reads, in one-letter code: Global transcriptional regulator CodY (262 aa).

The interval 1–159 (MAHLLEKTRK…ASTVVGIQLL (159 aa)) is GAF domain. A DNA-binding region (H-T-H motif) is located at residues 207–226 (ASVIADRIGITRSVIVNALR).

It belongs to the CodY family.

It localises to the cytoplasm. Functionally, DNA-binding global transcriptional regulator which is involved in the adaptive response to starvation and acts by directly or indirectly controlling the expression of numerous genes in response to nutrient availability. During rapid exponential growth, CodY is highly active and represses genes whose products allow adaptation to nutrient depletion. The sequence is that of Global transcriptional regulator CodY from Streptococcus pneumoniae (strain JJA).